Reading from the N-terminus, the 90-residue chain is YcgL domain-containing protein YE2368 (90 aa).

The YcgL domain occupies 1–85 (MLCAIYRSPK…PPESLLKMHL (85 aa)).

The sequence is that of YcgL domain-containing protein YE2368 from Yersinia enterocolitica serotype O:8 / biotype 1B (strain NCTC 13174 / 8081).